Here is a 214-residue protein sequence, read N- to C-terminus: ATP-dependent Clp protease proteolytic subunit (214 aa).

Catalysis depends on Ser-114, which acts as the Nucleophile. Residue His-139 is part of the active site.

Belongs to the peptidase S14 family. Fourteen ClpP subunits assemble into 2 heptameric rings which stack back to back to give a disk-like structure with a central cavity, resembling the structure of eukaryotic proteasomes.

The protein localises to the cytoplasm. It carries out the reaction Hydrolysis of proteins to small peptides in the presence of ATP and magnesium. alpha-casein is the usual test substrate. In the absence of ATP, only oligopeptides shorter than five residues are hydrolyzed (such as succinyl-Leu-Tyr-|-NHMec, and Leu-Tyr-Leu-|-Tyr-Trp, in which cleavage of the -Tyr-|-Leu- and -Tyr-|-Trp bonds also occurs).. Cleaves peptides in various proteins in a process that requires ATP hydrolysis. Has a chymotrypsin-like activity. Plays a major role in the degradation of misfolded proteins. The sequence is that of ATP-dependent Clp protease proteolytic subunit from Nitrosomonas europaea (strain ATCC 19718 / CIP 103999 / KCTC 2705 / NBRC 14298).